Reading from the N-terminus, the 121-residue chain is Small ribosomal subunit protein uS13 (121 aa).

The segment at 94–121 (GLPVRGQSSKTNARTVKGPRKTVANKKK) is disordered. Residues 110 to 121 (KGPRKTVANKKK) are compositionally biased toward basic residues.

Belongs to the universal ribosomal protein uS13 family. Part of the 30S ribosomal subunit. Forms a loose heterodimer with protein S19. Forms two bridges to the 50S subunit in the 70S ribosome.

Functionally, located at the top of the head of the 30S subunit, it contacts several helices of the 16S rRNA. In the 70S ribosome it contacts the 23S rRNA (bridge B1a) and protein L5 of the 50S subunit (bridge B1b), connecting the 2 subunits; these bridges are implicated in subunit movement. Contacts the tRNAs in the A and P-sites. The protein is Small ribosomal subunit protein uS13 of Mesoplasma florum (strain ATCC 33453 / NBRC 100688 / NCTC 11704 / L1) (Acholeplasma florum).